Consider the following 471-residue polypeptide: Tryptophanase (471 aa).

Lysine 5, lysine 115, and lysine 156 each carry N6-acetyllysine. An N6-(pyridoxal phosphate)lysine modification is found at lysine 270. An N6-acetyllysine modification is found at lysine 450.

This sequence belongs to the beta-eliminating lyase family. As to quaternary structure, homotetramer. The cofactor is pyridoxal 5'-phosphate.

The enzyme catalyses L-tryptophan + H2O = indole + pyruvate + NH4(+). Its pathway is amino-acid degradation; L-tryptophan degradation via pyruvate pathway; indole and pyruvate from L-tryptophan: step 1/1. The protein is Tryptophanase of Escherichia coli O6:H1 (strain CFT073 / ATCC 700928 / UPEC).